Here is a 229-residue protein sequence, read N- to C-terminus: UPF0173 metal-dependent hydrolase SERP1270 (229 aa).

Belongs to the UPF0173 family.

The protein is UPF0173 metal-dependent hydrolase SERP1270 of Staphylococcus epidermidis (strain ATCC 35984 / DSM 28319 / BCRC 17069 / CCUG 31568 / BM 3577 / RP62A).